We begin with the raw amino-acid sequence, 301 residues long: Probable alpha-L-glutamate ligase (301 aa).

One can recognise an ATP-grasp domain in the interval 104 to 287 (LQLLARKGVG…VAGMIINWTE (184 aa)). ATP contacts are provided by residues lysine 141, 178–179 (EF), aspartate 187, and 211–213 (RSN). Mg(2+) contacts are provided by aspartate 248, glutamate 260, and asparagine 262. Mn(2+)-binding residues include aspartate 248, glutamate 260, and asparagine 262.

Belongs to the RimK family. It depends on Mg(2+) as a cofactor. The cofactor is Mn(2+).

This Marinobacter nauticus (strain ATCC 700491 / DSM 11845 / VT8) (Marinobacter aquaeolei) protein is Probable alpha-L-glutamate ligase.